We begin with the raw amino-acid sequence, 442 residues long: Yes-associated protein homolog 1 (442 aa).

A compositionally biased stretch (basic residues) spans 1–10; that stretch reads MASKSIHKKH. The tract at residues 1 to 84 is disordered; it reads MASKSIHKKH…GSVDESSRTA (84 aa). Composition is skewed to polar residues over residues 13 to 22 and 55 to 71; these read NSQQDKNQFS and LPSS…SSAH. Position 104 is a phosphoserine (Ser-104). Residues 108–120 show a composition bias toward polar residues; sequence LHTSVNNGQSSAT. The tract at residues 108–136 is disordered; sequence LHTSVNNGQSSATVPHPSHHNVHHQHSKS. The segment covering 124–134 has biased composition (basic residues); the sequence is PSHHNVHHQHS. A WW domain is found at 203–236; it reads LPMPQGWEMCYDSDGVRYFKDHNSKTTTWDDPRL.

Belongs to the YAP1 family. Highly divergent. Interacts (via WW domain) with wts-1 (via N-terminus). Interacts (via WW domain) with egl-44; the interaction may regulate transcription. In terms of tissue distribution, expressed in epithelia, hypodermis, muscles, pharynx, intestine, gonadal sheath cells, vulva, spermatheca and in excretory tissue.

It is found in the cytoplasm. The protein resides in the nucleus. The protein localises to the cell projection. Its subcellular location is the cilium. It localises to the cytoskeleton. It is found in the cilium axoneme. In terms of biological role, plays a role in thermal stress response and in aging. The protein is Yes-associated protein homolog 1 of Caenorhabditis elegans.